The primary structure comprises 143 residues: Putative pre-16S rRNA nuclease (143 aa).

It belongs to the YqgF nuclease family.

It is found in the cytoplasm. Could be a nuclease involved in processing of the 5'-end of pre-16S rRNA. In Lactococcus lactis subsp. cremoris (strain SK11), this protein is Putative pre-16S rRNA nuclease.